Here is a 71-residue protein sequence, read N- to C-terminus: MKSFKDVKVGEIFCLDNGDQLIRISPLKSTSEKMTVNATLANNSNERFCIENDTETYTVEEFWELSVDCDE.

This is an uncharacterized protein from Enterobacteria phage T4 (Bacteriophage T4).